The sequence spans 523 residues: Apoptosis inhibitor 5 (523 aa).

The segment at 1–360 (MPTVEELYRN…HQLGRKLPDF (360 aa)) is ARM-like and Heat-like helical repeats. The segment at 446 to 523 (VQKADANQKR…RGNRSRGRIY (78 aa)) is disordered. Residues 454–475 (KRTSEDTTSSSPPKKASAGPKR) carry the Nuclear localization signal motif. A compositionally biased stretch (low complexity) spans 460–471 (TTSSSPPKKASA). A compositionally biased stretch (polar residues) spans 487–497 (KYSSNLGSFSY). Gly residues predominate over residues 502 to 515 (GFRGGRGRGWGGRG).

The protein belongs to the API5 family. As to quaternary structure, monomer.

The protein resides in the nucleus. It is found in the cytoplasm. Its function is as follows. Antiapoptotic factor that may have a role in protein assembly. This is Apoptosis inhibitor 5 (API5) from Gallus gallus (Chicken).